A 553-amino-acid polypeptide reads, in one-letter code: Retrotransposon Gag-like protein 3 (553 aa).

Positions 2–43 (VEDLAASYVTLKLENEILQAQVKRLMEENAALQAQIPELQKS) form a coiled coil. 2 disordered regions span residues 38–274 (PELQ…PLDP) and 474–514 (SGGV…EAER). A compositionally biased stretch (basic and acidic residues) spans 45–57 (AVKEHEPLRKPSE). Residues 58–73 (AQEPPESPEFPAARES) are compositionally biased toward low complexity. Over residues 87-113 (EPTKIREPREPSAISELREPPEIKEPQ) the composition is skewed to basic and acidic residues. Positions 118-127 (TNESGESSAI) are enriched in polar residues. Residues 132-147 (GSPEIKEPHLPPKSKE) are compositionally biased toward basic and acidic residues. Positions 239-250 (QTVPEYQETSSQ) are enriched in polar residues. Low complexity predominate over residues 474 to 483 (SGGVDSSSSS). The span at 495-507 (TENQPVQATSNRP) shows a compositional bias: polar residues. A CCHC-type zinc finger spans residues 523–537 (CLYCGHPGHFARDCP).

Expressed in embryonic myogenic progenitor cells, not expressed in adult and aged satellite cells.

It is found in the nucleus. Functionally, may function as a transcriptional regulator. Plays a role in postnatal myogenesis, may be involved in the regulation of satellite cells self-renewal. The sequence is that of Retrotransposon Gag-like protein 3 from Mus musculus (Mouse).